A 232-amino-acid chain; its full sequence is tRNA1(Val) (adenine(37)-N6)-methyltransferase (232 aa).

This sequence belongs to the methyltransferase superfamily. tRNA (adenine-N(6)-)-methyltransferase family.

It localises to the cytoplasm. It carries out the reaction adenosine(37) in tRNA1(Val) + S-adenosyl-L-methionine = N(6)-methyladenosine(37) in tRNA1(Val) + S-adenosyl-L-homocysteine + H(+). Specifically methylates the adenine in position 37 of tRNA(1)(Val) (anticodon cmo5UAC). The sequence is that of tRNA1(Val) (adenine(37)-N6)-methyltransferase from Haemophilus influenzae (strain ATCC 51907 / DSM 11121 / KW20 / Rd).